The chain runs to 564 residues: Dihydroxy-acid dehydratase (564 aa).

C51 provides a ligand contact to [2Fe-2S] cluster. A Mg(2+)-binding site is contributed by D83. Residue C124 participates in [2Fe-2S] cluster binding. 2 residues coordinate Mg(2+): D125 and K126. K126 is modified (N6-carboxylysine). A [2Fe-2S] cluster-binding site is contributed by C196. A Mg(2+)-binding site is contributed by E448. The active-site Proton acceptor is S474.

Belongs to the IlvD/Edd family. In terms of assembly, homodimer. [2Fe-2S] cluster is required as a cofactor. The cofactor is Mg(2+).

It carries out the reaction (2R)-2,3-dihydroxy-3-methylbutanoate = 3-methyl-2-oxobutanoate + H2O. It catalyses the reaction (2R,3R)-2,3-dihydroxy-3-methylpentanoate = (S)-3-methyl-2-oxopentanoate + H2O. The protein operates within amino-acid biosynthesis; L-isoleucine biosynthesis; L-isoleucine from 2-oxobutanoate: step 3/4. It participates in amino-acid biosynthesis; L-valine biosynthesis; L-valine from pyruvate: step 3/4. Functions in the biosynthesis of branched-chain amino acids. Catalyzes the dehydration of (2R,3R)-2,3-dihydroxy-3-methylpentanoate (2,3-dihydroxy-3-methylvalerate) into 2-oxo-3-methylpentanoate (2-oxo-3-methylvalerate) and of (2R)-2,3-dihydroxy-3-methylbutanoate (2,3-dihydroxyisovalerate) into 2-oxo-3-methylbutanoate (2-oxoisovalerate), the penultimate precursor to L-isoleucine and L-valine, respectively. The chain is Dihydroxy-acid dehydratase from Polynucleobacter asymbioticus (strain DSM 18221 / CIP 109841 / QLW-P1DMWA-1) (Polynucleobacter necessarius subsp. asymbioticus).